Consider the following 102-residue polypeptide: NADH-quinone oxidoreductase subunit K (102 aa).

3 consecutive transmembrane segments (helical) span residues 6-26, 30-50, and 62-82; these read FEHALVLASVLFVLGLVALLI, LIVMLMSVEIMLNAAGLAFIA, and VMFLLILTLAAAEVGVGLGLG.

Belongs to the complex I subunit 4L family. As to quaternary structure, NDH-1 is composed of 14 different subunits. Subunits NuoA, H, J, K, L, M, N constitute the membrane sector of the complex.

It is found in the cell inner membrane. It catalyses the reaction a quinone + NADH + 5 H(+)(in) = a quinol + NAD(+) + 4 H(+)(out). In terms of biological role, NDH-1 shuttles electrons from NADH, via FMN and iron-sulfur (Fe-S) centers, to quinones in the respiratory chain. The immediate electron acceptor for the enzyme in this species is believed to be ubiquinone. Couples the redox reaction to proton translocation (for every two electrons transferred, four hydrogen ions are translocated across the cytoplasmic membrane), and thus conserves the redox energy in a proton gradient. The sequence is that of NADH-quinone oxidoreductase subunit K from Methylococcus capsulatus (strain ATCC 33009 / NCIMB 11132 / Bath).